A 450-amino-acid chain; its full sequence is Benzene 1,2-dioxygenase subunit alpha (450 aa).

The region spanning 54–163 (WLLLGHETQI…VETYKGLIFA (110 aa)) is the Rieske domain. Positions 96, 98, 116, and 119 each coordinate [2Fe-2S] cluster. 2 residues coordinate Fe cation: histidine 222 and histidine 228.

The protein belongs to the bacterial ring-hydroxylating dioxygenase alpha subunit family. This dioxygenase system consists of four proteins: the two subunits of the hydroxylase component (BnzA and BnzB), a ferredoxin (BnzC) and a ferredoxin reductase (BnzD). The cofactor is [2Fe-2S] cluster. Fe cation is required as a cofactor.

It catalyses the reaction benzene + NADH + O2 + H(+) = cis-1,2-dihydrobenzene-1,2-diol + NAD(+). The enzyme catalyses toluene + NADH + O2 + H(+) = (1S,2R)-3-methylcyclohexa-3,5-diene-1,2-diol + NAD(+). The protein operates within aromatic compound metabolism; benzene degradation; catechol from benzene: step 1/2. Its pathway is xenobiotic degradation; toluene degradation. It functions in the pathway xenobiotic degradation; xylene degradation. Its function is as follows. Catalyzes both the oxidation of benzene and toluene. In Pseudomonas putida (strain ATCC 700007 / DSM 6899 / JCM 31910 / BCRC 17059 / LMG 24140 / F1), this protein is Benzene 1,2-dioxygenase subunit alpha (bnzA).